Here is a 385-residue protein sequence, read N- to C-terminus: MAFRKSNVYLNLVNSYLIDSPQPSSINYWWNMGSLLGLCLVIQILTGIFMAMHYSSNIELAFSSVEHIMRDVQTGWLLRYTHANGASFFFAVMYMHMAKGLYYGSYRSPRTLVWIIGVIIFVATMAAAFLGYCCVYGQMSHWGATVITNLFSAIPFVGKDIVQWLWGGFAVSNPTIQRFFALHYLVPFIIAALVVMHFMALHVHGSSNPLGITGNLDRLPMHGYFIFKDLITVFVFLIIFSLFVFYSPNTLGHPDNYIPGNPMVTPASIVPEWYLLPFYAILRSIPDKLLGVITMFGAILVLLVLPLTDKSVIRGNTFKVISKLFFFLFVFNFILLGVLGSCHVEVPFVQMGQYATFLYFAYFLIFVPIISYIENLLFYIGNNNS.

4 consecutive transmembrane segments (helical) span residues 32–52 (MGSL…FMAM), 76–98 (WLLR…MHMA), 113–133 (VWII…LGYC), and 179–199 (FFAL…MHFM). Residues H82 and H96 each contribute to the heme b site. Heme b is bound by residues H183 and H197. An a ubiquinone-binding site is contributed by H202. A run of 4 helical transmembrane segments spans residues 225-245 (FIFK…LFVF), 289-309 (LLGV…PLTD), 321-341 (ISKL…VLGS), and 348-368 (FVQM…IFVP).

It belongs to the cytochrome b family. In terms of assembly, fungal cytochrome b-c1 complex contains 10 subunits; 3 respiratory subunits, 2 core proteins and 5 low-molecular weight proteins. Cytochrome b-c1 complex is a homodimer. Heme b serves as cofactor.

The protein localises to the mitochondrion inner membrane. In terms of biological role, component of the ubiquinol-cytochrome c reductase complex (complex III or cytochrome b-c1 complex) that is part of the mitochondrial respiratory chain. The b-c1 complex mediates electron transfer from ubiquinol to cytochrome c. Contributes to the generation of a proton gradient across the mitochondrial membrane that is then used for ATP synthesis. This chain is Cytochrome b (COB), found in Monosporozyma servazzii (Yeast).